The following is a 512-amino-acid chain: Annexin A7 (512 aa).

A compositionally biased stretch (low complexity) spans 14–38 (GYPGGDPSYPPAAQQAFPGGQFPPA). 2 disordered regions span residues 14–62 (GYPG…GYPH) and 146–190 (GGFS…AQPT). The segment covering 39–52 (AGGGAFPPASGGGN) has biased composition (gly residues). The span at 164–182 (MPGQMPGQMPGQAPSGYPS) shows a compositional bias: low complexity. 4 Annexin repeats span residues 209–279 (FDAL…ALFM), 280–351 (PSTY…SIMA), 364–436 (QQAE…AVLQ), and 440–511 (NRPL…AISG).

Belongs to the annexin family.

Functionally, calcium/phospholipid-binding protein which promotes membrane fusion and is involved in exocytosis. This Xenopus laevis (African clawed frog) protein is Annexin A7 (anxa7).